A 256-amino-acid chain; its full sequence is Adenylate kinase (256 aa).

Position 45 to 50 (G45 to T50) interacts with ATP. Residues A67–V96 are NMP. AMP is bound by residues T68, R73, A94–V96, G123–R126, and Q130. The tract at residues G164 to D201 is LID. ATP contacts are provided by residues R165 and S174 to Y175. AMP contacts are provided by R198 and R209. Q237 contacts ATP.

Belongs to the adenylate kinase family. AK2 subfamily. Monomer.

The protein resides in the cytoplasm. The protein localises to the cytosol. It localises to the mitochondrion intermembrane space. The catalysed reaction is AMP + ATP = 2 ADP. Its function is as follows. Catalyzes the reversible transfer of the terminal phosphate group between ATP and AMP. Plays an important role in cellular energy homeostasis and in adenine nucleotide metabolism. Adenylate kinase activity is critical for regulation of the phosphate utilization and the AMP de novo biosynthesis pathways. The sequence is that of Adenylate kinase from Malassezia globosa (strain ATCC MYA-4612 / CBS 7966) (Dandruff-associated fungus).